A 456-amino-acid chain; its full sequence is Glutamyl-tRNA(Gln) amidotransferase subunit A (456 aa).

Catalysis depends on charge relay system residues Lys-74 and Ser-149. The active-site Acyl-ester intermediate is Ser-173.

It belongs to the amidase family. GatA subfamily. In terms of assembly, heterotrimer of A, B and C subunits.

It catalyses the reaction L-glutamyl-tRNA(Gln) + L-glutamine + ATP + H2O = L-glutaminyl-tRNA(Gln) + L-glutamate + ADP + phosphate + H(+). In terms of biological role, allows the formation of correctly charged Gln-tRNA(Gln) through the transamidation of misacylated Glu-tRNA(Gln) in organisms which lack glutaminyl-tRNA synthetase. The reaction takes place in the presence of glutamine and ATP through an activated gamma-phospho-Glu-tRNA(Gln). The chain is Glutamyl-tRNA(Gln) amidotransferase subunit A from Methanobrevibacter smithii (strain ATCC 35061 / DSM 861 / OCM 144 / PS).